An 89-amino-acid polypeptide reads, in one-letter code: MYLDSAKKAELFEKYGKSVKDTGSPESQIALFTFRIAHLTEHLRQNKKDFATERSLKMLVGKRRRMLDYLIKVDIERYRAIIKELGIRR.

The protein belongs to the universal ribosomal protein uS15 family. As to quaternary structure, part of the 30S ribosomal subunit. Forms a bridge to the 50S subunit in the 70S ribosome, contacting the 23S rRNA.

Functionally, one of the primary rRNA binding proteins, it binds directly to 16S rRNA where it helps nucleate assembly of the platform of the 30S subunit by binding and bridging several RNA helices of the 16S rRNA. Forms an intersubunit bridge (bridge B4) with the 23S rRNA of the 50S subunit in the ribosome. The polypeptide is Small ribosomal subunit protein uS15 (Porphyromonas gingivalis (strain ATCC 33277 / DSM 20709 / CIP 103683 / JCM 12257 / NCTC 11834 / 2561)).